We begin with the raw amino-acid sequence, 212 residues long: MSEIAATIATDLLTIKAVTLRPNDPFTWASGIKSPIYTDNRLTISYPAVRQHIAHGIAAIIKREYPATEVIAGVATAGIPHAAWVAELLNLPLIYVRAKPKDHGAGRQIEGVLKPGQKVVMLDDLISTGGSVLQAAKAVQAAGGDIQAVGAIFSYALDAATQNFAAASLPLFSLSNYPELIKVARQADYIDDEELASLHTWRQDPEHWGVTD.

5-phospho-alpha-D-ribose 1-diphosphate is bound by residues Arg-97, Lys-101, His-103, and 123-131 (DDLISTGGS). Ser-127 serves as a coordination point for orotate.

Belongs to the purine/pyrimidine phosphoribosyltransferase family. PyrE subfamily. In terms of assembly, homodimer. Requires Mg(2+) as cofactor.

It catalyses the reaction orotidine 5'-phosphate + diphosphate = orotate + 5-phospho-alpha-D-ribose 1-diphosphate. Its pathway is pyrimidine metabolism; UMP biosynthesis via de novo pathway; UMP from orotate: step 1/2. Functionally, catalyzes the transfer of a ribosyl phosphate group from 5-phosphoribose 1-diphosphate to orotate, leading to the formation of orotidine monophosphate (OMP). The protein is Orotate phosphoribosyltransferase of Lactiplantibacillus plantarum (strain ATCC BAA-793 / NCIMB 8826 / WCFS1) (Lactobacillus plantarum).